The primary structure comprises 317 residues: Biotin synthase (317 aa).

A Radical SAM core domain is found at 42–260 (NRIQLSTLLS…IAVTRLCMPK (219 aa)). The [4Fe-4S] cluster site is built by cysteine 57, cysteine 61, and cysteine 64. Cysteine 101, cysteine 132, cysteine 192, and arginine 264 together coordinate [2Fe-2S] cluster.

The protein belongs to the radical SAM superfamily. Biotin synthase family. In terms of assembly, homodimer. [4Fe-4S] cluster is required as a cofactor. The cofactor is [2Fe-2S] cluster.

It carries out the reaction (4R,5S)-dethiobiotin + (sulfur carrier)-SH + 2 reduced [2Fe-2S]-[ferredoxin] + 2 S-adenosyl-L-methionine = (sulfur carrier)-H + biotin + 2 5'-deoxyadenosine + 2 L-methionine + 2 oxidized [2Fe-2S]-[ferredoxin]. It participates in cofactor biosynthesis; biotin biosynthesis; biotin from 7,8-diaminononanoate: step 2/2. In terms of biological role, catalyzes the conversion of dethiobiotin (DTB) to biotin by the insertion of a sulfur atom into dethiobiotin via a radical-based mechanism. The polypeptide is Biotin synthase (Thiobacillus denitrificans (strain ATCC 25259 / T1)).